Reading from the N-terminus, the 382-residue chain is Lipid-A-disaccharide synthase (382 aa).

This sequence belongs to the LpxB family.

The enzyme catalyses 2-N,3-O-bis[(3R)-3-hydroxytetradecanoyl]-alpha-D-glucosaminyl 1-phosphate + UDP-2-N,3-O-bis[(3R)-3-hydroxytetradecanoyl]-alpha-D-glucosamine = lipid A disaccharide (E. coli) + UDP + H(+). It catalyses the reaction a lipid X + a UDP-2-N,3-O-bis[(3R)-3-hydroxyacyl]-alpha-D-glucosamine = a lipid A disaccharide + UDP + H(+). It participates in glycolipid biosynthesis; lipid IV(A) biosynthesis; lipid IV(A) from (3R)-3-hydroxytetradecanoyl-[acyl-carrier-protein] and UDP-N-acetyl-alpha-D-glucosamine: step 5/6. Functionally, condensation of UDP-2,3-diacylglucosamine and 2,3-diacylglucosamine-1-phosphate to form lipid A disaccharide, a precursor of lipid A, a phosphorylated glycolipid that anchors the lipopolysaccharide to the outer membrane of the cell. The sequence is that of Lipid-A-disaccharide synthase from Salmonella heidelberg (strain SL476).